A 206-amino-acid polypeptide reads, in one-letter code: dITP/XTP pyrophosphatase (206 aa).

Residue Ser-10 to Lys-15 participates in substrate binding. Residue Asp-75 is the Proton acceptor of the active site. Mg(2+) is bound at residue Asp-75. Substrate is bound by residues Ser-76, Phe-158–Asp-161, Lys-181, and His-186–Arg-187.

The protein belongs to the HAM1 NTPase family. Homodimer. It depends on Mg(2+) as a cofactor.

It carries out the reaction XTP + H2O = XMP + diphosphate + H(+). The enzyme catalyses dITP + H2O = dIMP + diphosphate + H(+). It catalyses the reaction ITP + H2O = IMP + diphosphate + H(+). Functionally, pyrophosphatase that catalyzes the hydrolysis of nucleoside triphosphates to their monophosphate derivatives, with a high preference for the non-canonical purine nucleotides XTP (xanthosine triphosphate), dITP (deoxyinosine triphosphate) and ITP. Seems to function as a house-cleaning enzyme that removes non-canonical purine nucleotides from the nucleotide pool, thus preventing their incorporation into DNA/RNA and avoiding chromosomal lesions. This is dITP/XTP pyrophosphatase from Nocardia farcinica (strain IFM 10152).